Reading from the N-terminus, the 258-residue chain is Acetylglutamate kinase (258 aa).

Residues glycine 44–glycine 45, arginine 66, and asparagine 158 each bind substrate. ATP is bound by residues aspartate 181–leucine 186 and isoleucine 209–threonine 211.

It belongs to the acetylglutamate kinase family. ArgB subfamily. Homodimer.

Its subcellular location is the cytoplasm. The catalysed reaction is N-acetyl-L-glutamate + ATP = N-acetyl-L-glutamyl 5-phosphate + ADP. It functions in the pathway amino-acid biosynthesis; L-arginine biosynthesis; N(2)-acetyl-L-ornithine from L-glutamate: step 2/4. Functionally, catalyzes the ATP-dependent phosphorylation of N-acetyl-L-glutamate. This Klebsiella pneumoniae subsp. pneumoniae (strain ATCC 700721 / MGH 78578) protein is Acetylglutamate kinase.